A 174-amino-acid chain; its full sequence is Shikimate kinase 2 (174 aa).

12–17 (GAGKTT) contacts ATP. 2 residues coordinate Mg(2+): Thr16 and Asp32. Positions 34, 58, and 79 each coordinate substrate. The tract at residues 112–126 (AEDPEEAQRPSLTGK) is LID domain. Arg120 lines the ATP pocket. A substrate-binding site is contributed by Arg139. Gln155 contributes to the ATP binding site.

It belongs to the shikimate kinase family. AroL subfamily. Monomer. Mg(2+) serves as cofactor.

It localises to the cytoplasm. It carries out the reaction shikimate + ATP = 3-phosphoshikimate + ADP + H(+). It participates in metabolic intermediate biosynthesis; chorismate biosynthesis; chorismate from D-erythrose 4-phosphate and phosphoenolpyruvate: step 5/7. Functionally, catalyzes the specific phosphorylation of the 3-hydroxyl group of shikimic acid using ATP as a cosubstrate. This is Shikimate kinase 2 from Yersinia pestis bv. Antiqua (strain Antiqua).